The primary structure comprises 40 residues: Snaclec LmrLEC-1 (40 aa).

Cys2 and Cys13 are disulfide-bonded.

It belongs to the snaclec family. In terms of assembly, dimer (non-covalently linked) of heterodimers of subunits alpha and beta (disulfide-linked). In terms of tissue distribution, expressed by the venom gland.

It localises to the secreted. Interferes with one step of hemostasis (modulation of platelet aggregation, or coagulation cascade, for example). In Lachesis muta rhombeata (Bushmaster), this protein is Snaclec LmrLEC-1.